We begin with the raw amino-acid sequence, 401 residues long: O-methyltransferase mfmE (401 aa).

Residues 243–244 (GG) and Asp268 each bind S-adenosyl-L-methionine. Residue His308 is the Proton acceptor of the active site.

It belongs to the class I-like SAM-binding methyltransferase superfamily. Cation-independent O-methyltransferase family. COMT subfamily.

Its pathway is secondary metabolite biosynthesis; terpenoid biosynthesis. Its function is as follows. O-methyltransferase; part of the gene cluster that mediates the biosynthesis of the phthalide-terpenoid hybrid 11'-O-desmethylfendlerol. Within the pathway, mfmE catalyzes the 7-O-methylation of the phthalide 5,7-dihydroxy-4-(hydroxymethyl)-6-methylphthalide to yield 5-hydroxy-4-(hydroxymethyl)-7-methoxy-6-methylphthalide. The biosynthesis of 11'-O-desmethylfendlerol begins with the NR-PKS mfmB that forms 3,5-dimethylorsellinic acid (DMOA), which is then transformed into the phthalide 5,7-dihydroxy-4-(hydroxymethyl)-6-methylphthalide by the cytochrome P450 monooxygenase mfmA and the hydrolase mfmC. Subsequently, the methyltransferase mfmE catalyzes 7-O-methylation to yield 5-hydroxy-4-(hydroxymethyl)-7-methoxy-6-methylphthalide, which undergoes C-3 hydroxylation by the cytochrome P450 monooxygenase mfmF. The resultant cyclopolic acid (2,5-dihydroxy-4-(hydroxymethyl)-7-methoxy-6-methylphthalide) is then farnesylated by the DMATS-type prenyltransferase mfmD to afford 5-O-farnesylcyclopolic acid. Finally, the Pyr4-family terpene cyclase mfmH cyclizes the farnesyl moiety of 5-O-farnesylcyclopolic acid into a drimane-like structure, thus completing the biosynthesis of 11'-O-desmethylfendlerol. This chain is O-methyltransferase mfmE, found in Annulohypoxylon moriforme (Filamentous fungus).